A 286-amino-acid chain; its full sequence is Transcriptional regulator of yeast form adherence 4 (286 aa).

Composition is skewed to low complexity over residues 1-29 and 37-65; these read MSLP…PPSS and LSTS…TTTN. The segment at 1–71 is disordered; it reads MSLPMSPVSP…TTTNYGTKTP (71 aa). C2H2-type zinc fingers lie at residues 78 to 101 and 107 to 130; these read FNCT…LSTH and FTCG…KNLH. Residues 146–260 are disordered; it reads HCNKDNDSKS…ITNSSTSHIH (115 aa). Low complexity-rich tracts occupy residues 156–165 and 228–244; these read GSDSNTNKTN and SVPS…PTST. Over residues 245–260 the composition is skewed to polar residues; it reads NNDTASITNSSTSHIH.

The protein localises to the nucleus. In terms of biological role, transcription factor required for yeast cell adherence to silicone substrate. The polypeptide is Transcriptional regulator of yeast form adherence 4 (TRY4) (Candida albicans (strain SC5314 / ATCC MYA-2876) (Yeast)).